The sequence spans 414 residues: ORC1-type DNA replication protein 1 (414 aa).

Residues 70–74, Tyr213, and Arg225 contribute to the ATP site; that span reads TGKTA.

The protein belongs to the CDC6/cdc18 family.

In terms of biological role, involved in regulation of DNA replication. The protein is ORC1-type DNA replication protein 1 (cdc6-1) of Methanosarcina mazei (strain ATCC BAA-159 / DSM 3647 / Goe1 / Go1 / JCM 11833 / OCM 88) (Methanosarcina frisia).